The primary structure comprises 252 residues: Auxin-induced in root cultures protein 12 (252 aa).

Positions 1–25 (MASSSSSLLILAVACFVSLISPAIS) are cleaved as a signal peptide. A DOMON domain is found at 49-165 (LNSYLHYTYN…DSVNQVWQIG (117 aa)). Asn-58 and Asn-61 each carry an N-linked (GlcNAc...) asparagine glycan. Met-91 lines the heme pocket. Asn-114 and Asn-167 each carry an N-linked (GlcNAc...) asparagine glycan. His-176 contributes to the heme binding site. The segment at 193–224 (EDAAPGSAPSPGSAPAPGTSGSTTPGTAAGGP) is disordered. Positions 195–219 (AAPGSAPSPGSAPAPGTSGSTTPGT) are enriched in low complexity. A lipid anchor (GPI-anchor amidated asparagine) is attached at Asn-226. A propeptide spans 227–252 (AGSLTRNVNFGVNLGILVLLGSIFIF) (removed in mature form).

It depends on heme as a cofactor.

It localises to the cell membrane. Its function is as follows. One-heme-containing cytochrome. This is Auxin-induced in root cultures protein 12 (AIR12) from Arabidopsis thaliana (Mouse-ear cress).